Reading from the N-terminus, the 979-residue chain is Glycine dehydrogenase (decarboxylating) (979 aa).

At lysine 724 the chain carries N6-(pyridoxal phosphate)lysine.

This sequence belongs to the GcvP family. In terms of assembly, the glycine cleavage system is composed of four proteins: P, T, L and H. The cofactor is pyridoxal 5'-phosphate.

It catalyses the reaction N(6)-[(R)-lipoyl]-L-lysyl-[glycine-cleavage complex H protein] + glycine + H(+) = N(6)-[(R)-S(8)-aminomethyldihydrolipoyl]-L-lysyl-[glycine-cleavage complex H protein] + CO2. In terms of biological role, the glycine cleavage system catalyzes the degradation of glycine. The P protein binds the alpha-amino group of glycine through its pyridoxal phosphate cofactor; CO(2) is released and the remaining methylamine moiety is then transferred to the lipoamide cofactor of the H protein. The chain is Glycine dehydrogenase (decarboxylating) from Nostoc punctiforme (strain ATCC 29133 / PCC 73102).